The sequence spans 369 residues: Flagellar P-ring protein (369 aa).

A signal peptide spans 1 to 22 (MIKLKQLIAATLLLSTAFGVHA).

The protein belongs to the FlgI family. As to quaternary structure, the basal body constitutes a major portion of the flagellar organelle and consists of four rings (L,P,S, and M) mounted on a central rod.

The protein localises to the periplasm. It localises to the bacterial flagellum basal body. Assembles around the rod to form the L-ring and probably protects the motor/basal body from shearing forces during rotation. In Pseudomonas savastanoi pv. phaseolicola (strain 1448A / Race 6) (Pseudomonas syringae pv. phaseolicola (strain 1448A / Race 6)), this protein is Flagellar P-ring protein.